Here is a 102-residue protein sequence, read N- to C-terminus: RNA-binding protein Hfq (102 aa).

Residues 9–68 (DPFLNALRRERVPVSIYLVNGIKLQGQIESFDQFVILLKNTVSQMVYKHAISTVVPSRPV) enclose the Sm domain. A disordered region spans residues 63–102 (VPSRPVSHHSNNAGGGSSNYHHGGSAQGSSAPQQDSDDAE). Low complexity predominate over residues 70–86 (HHSNNAGGGSSNYHHGG).

Belongs to the Hfq family. Homohexamer.

In terms of biological role, RNA chaperone that binds small regulatory RNA (sRNAs) and mRNAs to facilitate mRNA translational regulation in response to envelope stress, environmental stress and changes in metabolite concentrations. Also binds with high specificity to tRNAs. In Klebsiella pneumoniae (strain 342), this protein is RNA-binding protein Hfq.